The following is a 316-amino-acid chain: Large ribosomal subunit protein uL10 (316 aa).

The disordered stretch occupies residues 289–316 (AAAAAPAKEAPKEESEESDEDMGFGLFD).

The protein belongs to the universal ribosomal protein uL10 family. P0 forms a pentameric complex by interaction with dimers of P1 and P2. In terms of processing, phosphorylated.

The protein resides in the nucleus. It is found in the cytoplasm. In terms of biological role, ribosomal protein P0 is the functional equivalent of E.coli protein L10. In Gallus gallus (Chicken), this protein is Large ribosomal subunit protein uL10 (RPLP0).